A 1104-amino-acid polypeptide reads, in one-letter code: Collagenase ColA (1104 aa).

A signal peptide spans 1 to 39 (MKKNLKRGELTKLKLVERWSATFTLAAFILFNSSFKVLA). A propeptide spanning residues 40–86 (ADKKVENSNNGQITREINADQISKTELNNEVATDNNRPLGPSIAPSR) is cleaved from the precursor. The segment at 87–761 (ARNNKIYTFD…YVYDVVFHGM (675 aa)) is S1 metalloprotease domain. Residues 93–367 (YTFDELNRMN…AANDLDLNFG (275 aa)) form an activator domain region. A catalytic subdomain region spans residues 377–646 (DFNKIKADAR…MDSLLNNIDN (270 aa)). E477 is a binding site for Ca(2+). Residue H502 coordinates Zn(2+). E503 is a catalytic residue. Position 506 (H506) interacts with Zn(2+). Residues G510, V514, and G516 each contribute to the Ca(2+) site. E534 contacts Zn(2+). The tract at residues 654–767 (DEYVNGHEAK…FHGMNTDTNT (114 aa)) is helper subdomain. The tract at residues 762 to 860 (NTDTNTDVHV…KKIKVVEDKP (99 aa)) is S2 domain. Ca(2+) contacts are provided by N772, K773, D800, D802, D841, E866, E868, N870, D894, D897, E993, E995, N997, L1016, D1020, K1022, and D1023. The region spanning 774–862 (EPKAVIKSDS…IKVVEDKPVE (89 aa)) is the PKD domain. The segment at 865–979 (NESEPNNDFE…TYTVNVKGNL (115 aa)) is S3a collagen-binding domain. The S3b collagen-binding domain stretch occupies residues 992–1104 (KEVENNNDFD…GNYIVNLQNK (113 aa)).

It belongs to the peptidase M9B family. Collagenase subfamily. Requires Ca(2+) as cofactor. It depends on Zn(2+) as a cofactor.

The protein resides in the secreted. It catalyses the reaction Digestion of native collagen in the triple helical region at Xaa-|-Gly bonds. With synthetic peptides, a preference is shown for Gly at P3 and P1', Pro and Ala at P2 and P2', and hydroxyproline, Ala or Arg at P3'.. Functionally, clostridial collagenases are among the most efficient degraders of eukaryotic collagen known; saprophytes use collagen as a carbon source while pathogens additionally digest collagen to aid in host colonization. Has both tripeptidylcarboxypeptidase on Gly-X-Y and endopeptidase activities; the endopeptidase cuts within the triple helix region of collagen while tripeptidylcarboxypeptidase successively digests the exposed ends, thus clostridial collagenases can digest large sections of collagen. The chain is Collagenase ColA (colA) from Clostridium perfringens (strain 13 / Type A).